The sequence spans 121 residues: Small ribosomal subunit protein uS13 (121 aa).

Residues 91–121 (HRKGLPMRGQRTRTNARTRKGPRKAGVALKK) form a disordered region.

This sequence belongs to the universal ribosomal protein uS13 family. As to quaternary structure, part of the 30S ribosomal subunit. Forms a loose heterodimer with protein S19. Forms two bridges to the 50S subunit in the 70S ribosome.

Located at the top of the head of the 30S subunit, it contacts several helices of the 16S rRNA. In the 70S ribosome it contacts the 23S rRNA (bridge B1a) and protein L5 of the 50S subunit (bridge B1b), connecting the 2 subunits; these bridges are implicated in subunit movement. Contacts the tRNAs in the A and P-sites. The sequence is that of Small ribosomal subunit protein uS13 from Cupriavidus taiwanensis (strain DSM 17343 / BCRC 17206 / CCUG 44338 / CIP 107171 / LMG 19424 / R1) (Ralstonia taiwanensis (strain LMG 19424)).